Consider the following 600-residue polypeptide: DNA polymerase alpha subunit B (600 aa).

A disordered region spans residues 107–165; sequence ETLLSSYTTPSKGPLKRVSSTPETPLTKRSVAARSPRQLLSPSSFSPSATPSQKYTSRT. A Phosphoserine modification is found at serine 126. Phosphothreonine is present on residues threonine 127 and threonine 130. Positions 139–159 are enriched in low complexity; the sequence is ARSPRQLLSPSSFSPSATPSQ. Residues serine 141, serine 147, serine 152, and serine 154 each carry the phosphoserine modification.

The protein belongs to the DNA polymerase alpha subunit B family. In terms of assembly, component of the alpha DNA polymerase complex (also known as the alpha DNA polymerase-primase complex) consisting of four subunits: the catalytic subunit POLA1, the regulatory subunit POLA2, and the primase complex subunits PRIM1 and PRIM2 respectively. Within the complex, POLA1 directly interacts with PRIM2. In terms of processing, phosphorylated in a cell cycle-dependent manner, in G2/M phase.

It is found in the nucleus. Its function is as follows. Accessory subunit of the DNA polymerase alpha complex (also known as the alpha DNA polymerase-primase complex) which plays an essential role in the initiation of DNA synthesis. During the S phase of the cell cycle, the DNA polymerase alpha complex (composed of a catalytic subunit POLA1, an accessory subunit POLA2 and two primase subunits, the catalytic subunit PRIM1 and the regulatory subunit PRIM2) is recruited to DNA at the replicative forks via direct interactions with MCM10 and WDHD1. The primase subunit of the polymerase alpha complex initiates DNA synthesis by oligomerising short RNA primers on both leading and lagging strands. These primers are initially extended by the polymerase alpha catalytic subunit and subsequently transferred to polymerase delta and polymerase epsilon for processive synthesis on the lagging and leading strand, respectively. In Mus musculus (Mouse), this protein is DNA polymerase alpha subunit B (Pola2).